Reading from the N-terminus, the 630-residue chain is DNA mismatch repair protein MutL (630 aa).

The protein belongs to the DNA mismatch repair MutL/HexB family.

In terms of biological role, this protein is involved in the repair of mismatches in DNA. It is required for dam-dependent methyl-directed DNA mismatch repair. May act as a 'molecular matchmaker', a protein that promotes the formation of a stable complex between two or more DNA-binding proteins in an ATP-dependent manner without itself being part of a final effector complex. The chain is DNA mismatch repair protein MutL from Lactobacillus johnsonii (strain CNCM I-12250 / La1 / NCC 533).